The sequence spans 327 residues: Probable cell division protein WhiA (327 aa).

A DNA-binding region (H-T-H motif) is located at residues 275 to 308; the sequence is SLEELGQLADPPMTKDAVAGRIRRLLSMADRKAK. Residues 306–327 form a disordered region; it reads KAKETGIPDTESAVTADLLDDA.

This sequence belongs to the WhiA family.

In terms of biological role, involved in cell division and chromosome segregation. The chain is Probable cell division protein WhiA from Rhodococcus jostii (strain RHA1).